The sequence spans 681 residues: DNA ligase (681 aa).

NAD(+)-binding positions include 44–48, 94–95, and glutamate 124; these read DYIYD and SL. Lysine 126 (N6-AMP-lysine intermediate) is an active-site residue. Residues arginine 147, glutamate 181, lysine 297, and lysine 321 each contribute to the NAD(+) site. Zn(2+)-binding residues include cysteine 415, cysteine 418, cysteine 433, and cysteine 438. One can recognise a BRCT domain in the interval 598 to 681; it reads DETSFFYGKK…EAQAKEGTDK (84 aa).

This sequence belongs to the NAD-dependent DNA ligase family. LigA subfamily. Mg(2+) serves as cofactor. Mn(2+) is required as a cofactor.

It carries out the reaction NAD(+) + (deoxyribonucleotide)n-3'-hydroxyl + 5'-phospho-(deoxyribonucleotide)m = (deoxyribonucleotide)n+m + AMP + beta-nicotinamide D-nucleotide.. Functionally, DNA ligase that catalyzes the formation of phosphodiester linkages between 5'-phosphoryl and 3'-hydroxyl groups in double-stranded DNA using NAD as a coenzyme and as the energy source for the reaction. It is essential for DNA replication and repair of damaged DNA. In Leuconostoc citreum (strain KM20), this protein is DNA ligase.